The following is a 297-amino-acid chain: Formamidopyrimidine-DNA glycosylase (297 aa).

P2 functions as the Schiff-base intermediate with DNA in the catalytic mechanism. E3 acts as the Proton donor in catalysis. The active-site Proton donor; for beta-elimination activity is K58. DNA-binding residues include H104, R127, and K170. Residues 261–297 (SVYDREGKPCRKEGCSGTIQRFVQGGRSTFYCPICQR) form an FPG-type zinc finger. R287 serves as the catalytic Proton donor; for delta-elimination activity.

The protein belongs to the FPG family. In terms of assembly, monomer. Zn(2+) serves as cofactor.

It catalyses the reaction Hydrolysis of DNA containing ring-opened 7-methylguanine residues, releasing 2,6-diamino-4-hydroxy-5-(N-methyl)formamidopyrimidine.. The enzyme catalyses 2'-deoxyribonucleotide-(2'-deoxyribose 5'-phosphate)-2'-deoxyribonucleotide-DNA = a 3'-end 2'-deoxyribonucleotide-(2,3-dehydro-2,3-deoxyribose 5'-phosphate)-DNA + a 5'-end 5'-phospho-2'-deoxyribonucleoside-DNA + H(+). Involved in base excision repair of DNA damaged by oxidation or by mutagenic agents. Acts as a DNA glycosylase that recognizes and removes damaged bases. Has a preference for oxidized purines, such as 7,8-dihydro-8-oxoguanine (8-oxoG). Has AP (apurinic/apyrimidinic) lyase activity and introduces nicks in the DNA strand. Cleaves the DNA backbone by beta-delta elimination to generate a single-strand break at the site of the removed base with both 3'- and 5'-phosphates. In Chelativorans sp. (strain BNC1), this protein is Formamidopyrimidine-DNA glycosylase.